A 298-amino-acid chain; its full sequence is 4-hydroxy-tetrahydrodipicolinate synthase (298 aa).

Thr51 provides a ligand contact to pyruvate. Tyr139 (proton donor/acceptor) is an active-site residue. Residue Lys167 is the Schiff-base intermediate with substrate of the active site. Residue Ile209 coordinates pyruvate.

This sequence belongs to the DapA family. In terms of assembly, homotetramer; dimer of dimers.

The protein localises to the cytoplasm. The enzyme catalyses L-aspartate 4-semialdehyde + pyruvate = (2S,4S)-4-hydroxy-2,3,4,5-tetrahydrodipicolinate + H2O + H(+). The protein operates within amino-acid biosynthesis; L-lysine biosynthesis via DAP pathway; (S)-tetrahydrodipicolinate from L-aspartate: step 3/4. Catalyzes the condensation of (S)-aspartate-beta-semialdehyde [(S)-ASA] and pyruvate to 4-hydroxy-tetrahydrodipicolinate (HTPA). In Haemophilus influenzae (strain ATCC 51907 / DSM 11121 / KW20 / Rd), this protein is 4-hydroxy-tetrahydrodipicolinate synthase.